The following is a 313-amino-acid chain: Homoserine O-succinyltransferase (313 aa).

Catalysis depends on cysteine 142, which acts as the Acyl-thioester intermediate. Positions 163 and 192 each coordinate substrate. The active-site Proton acceptor is the histidine 235. The active site involves glutamate 237. Position 249 (arginine 249) interacts with substrate.

The protein belongs to the MetA family.

It localises to the cytoplasm. It catalyses the reaction L-homoserine + succinyl-CoA = O-succinyl-L-homoserine + CoA. It participates in amino-acid biosynthesis; L-methionine biosynthesis via de novo pathway; O-succinyl-L-homoserine from L-homoserine: step 1/1. In terms of biological role, transfers a succinyl group from succinyl-CoA to L-homoserine, forming succinyl-L-homoserine. This is Homoserine O-succinyltransferase from Vibrio vulnificus (strain CMCP6).